A 278-amino-acid chain; its full sequence is MALVEIFKAILLGIVEGITEWLPISSTGHMILVDEFIKLNMSAAFMEMFFVVIQLGAILAVVLLYWKKLNPFTFDRGVSVKQETIEMWFKIIVSCIPAGVIGLLWDDVFNALFYNYQTVAVMLIIFGILFIVIENYNKGKRPRVNHLSQITYTTAFMIGIFQLIAAIFPGTSRSGATIVGGLLLGVSRTVAAEFTFFLAIPVMFGASALKLLKFGFNFTGPELMILLIGMVVAFIVSVISIKFLMGYIKKNDFKIFGWYRIILGVIVLLYFSARTIIG.

8 helical membrane passes run 2–22, 44–64, 85–105, 113–133, 150–170, 189–209, 223–243, and 253–273; these read ALVE…TEWL, AFME…VVLL, IEMW…GLLW, FYNY…FIVI, ITYT…IFPG, TVAA…ASAL, LMIL…SIKF, and FKIF…YFSA.

The protein belongs to the UppP family.

It localises to the cell membrane. It carries out the reaction di-trans,octa-cis-undecaprenyl diphosphate + H2O = di-trans,octa-cis-undecaprenyl phosphate + phosphate + H(+). In terms of biological role, catalyzes the dephosphorylation of undecaprenyl diphosphate (UPP). Confers resistance to bacitracin. The protein is Undecaprenyl-diphosphatase of Desulfitobacterium hafniense (strain DSM 10664 / DCB-2).